The following is a 335-amino-acid chain: Beta-ketoacyl-[acyl-carrier-protein] synthase III (335 aa).

Residues cysteine 116 and histidine 256 contribute to the active site. An ACP-binding region spans residues 257–261 (QANLR). The active site involves asparagine 286.

The protein belongs to the thiolase-like superfamily. FabH family. Homodimer.

It localises to the cytoplasm. The catalysed reaction is malonyl-[ACP] + acetyl-CoA + H(+) = 3-oxobutanoyl-[ACP] + CO2 + CoA. It participates in lipid metabolism; fatty acid biosynthesis. Catalyzes the condensation reaction of fatty acid synthesis by the addition to an acyl acceptor of two carbons from malonyl-ACP. Catalyzes the first condensation reaction which initiates fatty acid synthesis and may therefore play a role in governing the total rate of fatty acid production. Possesses both acetoacetyl-ACP synthase and acetyl transacylase activities. Its substrate specificity determines the biosynthesis of branched-chain and/or straight-chain of fatty acids. The protein is Beta-ketoacyl-[acyl-carrier-protein] synthase III of Porphyromonas gingivalis (strain ATCC 33277 / DSM 20709 / CIP 103683 / JCM 12257 / NCTC 11834 / 2561).